The primary structure comprises 66 residues: Beta-defensin 13 (66 aa).

The N-terminal stretch at 1-22 is a signal peptide; that stretch reads MRIFSLIVAGLVLLIQLHPAKG. Cystine bridges form between cysteine 30–cysteine 59, cysteine 37–cysteine 51, and cysteine 41–cysteine 60.

Belongs to the beta-defensin family.

The protein localises to the secreted. Functionally, has antibacterial activity. This is Beta-defensin 13 (Defb13) from Rattus norvegicus (Rat).